The chain runs to 109 residues: Putative double-stranded DNA mimic protein YciU (109 aa).

This sequence belongs to the putative dsDNA mimic protein family.

May act as a double-stranded DNA (dsDNA) mimic. Probably regulates the activity of a dsDNA-binding protein. The sequence is that of Putative double-stranded DNA mimic protein YciU from Shigella flexneri.